We begin with the raw amino-acid sequence, 532 residues long: Chondroitin sulfate N-acetylgalactosaminyltransferase 1 (532 aa).

Over 1–14 (MMMVRRGLLAWISR) the chain is Cytoplasmic. Residues 15 to 35 (VVVLLVLLCCAISVLYMLACT) traverse the membrane as a helical; Signal-anchor for type II membrane protein segment. Residues 36 to 532 (PKGDEEQLAL…QKQKTSSKKT (497 aa)) are Lumenal-facing. Positions 57-100 (YQAVLQEWEEQHRNYVSSLKRQIAQLKEELQERSEQLRNGQYQA) form a coiled coil. N-linked (GlcNAc...) asparagine glycans are attached at residues asparagine 315 and asparagine 324. Aspartate 360 and histidine 477 together coordinate a divalent metal cation.

Belongs to the chondroitin N-acetylgalactosaminyltransferase family. In terms of processing, N-glycosylated. Ubiquitous, with the highest levels in placenta, thyroid, bladder, prostate and adrenal gland. Detected at low levels in the other tissues examined.

Its subcellular location is the golgi apparatus. The protein resides in the golgi stack membrane. The enzyme catalyses 3-O-(beta-D-GlcA-(1-&gt;3)-beta-D-Gal-(1-&gt;3)-beta-D-Gal-(1-&gt;4)-beta-D-Xyl)-L-seryl-[protein] + UDP-N-acetyl-alpha-D-galactosamine = 3-O-(beta-D-GalNAc-(1-&gt;4)-beta-D-GlcA-(1-&gt;3)-beta-D-Gal-(1-&gt;3)-beta-D-Gal-(1-&gt;4)-beta-D-Xyl)-L-seryl-[protein] + UDP + H(+). Functionally, transfers 1,4-N-acetylgalactosamine (GalNAc) from UDP-GalNAc to the non-reducing end of glucuronic acid (GlcUA). Required for addition of the first GalNAc to the core tetrasaccharide linker and for elongation of chondroitin chains. Important role in chondroitin chain biosynthesis in cartilage formation and subsequent endochondral ossification. Moreover, is involved in the metabolism of aggrecan. The protein is Chondroitin sulfate N-acetylgalactosaminyltransferase 1 of Homo sapiens (Human).